A 601-amino-acid chain; its full sequence is MAKNRNEITEKLTWDLTTIYKTDKEWEAELTRIKSELSLVEETDPGHLLDSAESLLTITEKMLSISQQVEKLYVYASMKNDQDTREAKYQEYQSKATALYVKFGEVYAFYEPEFLKISKEVYNKWLGELQKLKNYDHMFERLFAKKAHILSQKEEKLLAAAGEIFESPSETFEIFDNADIKLPMVKNESDEMIQLTHGNYSSLMESKNRGVRKAAYKALYSNYEQYQHTYAKTLQTNVKVHNLKAQIRSYDSARQAALANNFVPEKVYDVLMEAIHQHLPLLHRYIELRKKILGITDLKMYDIYTPLSNLDYKFNYEDGVKKAEEVLAIFGKEYKGKVKAAFEQRWIDVEENIGKRSGAYSGGSYDTNAFMLLNWQETLDDLFTLVHEMGHSMHSAFTRENQPYVYGDYPIFLAEIASTTNENILTETLLKESKDDKERFALLNHWLDSFRGTVFRQSQFAEFEQKIHEADAAGEVLTSEYLNSLYGEINEKYYNLAAKENPEIQYEWARIPHFYYNFYVFQYATGFAAATFLAEKVVHGSTEDRQKYLEYLKAGSSAYPLEVIAKAGVDMESTDYLDAAFELFENRLSELEKLVEKGVHL.

Zn(2+) is bound at residue His387. Glu388 is an active-site residue. His391 and His394 together coordinate Zn(2+).

Belongs to the peptidase M3 family. Zn(2+) is required as a cofactor.

Its function is as follows. Hydrolyzes peptides containing between 7 and 17 amino acids with a rather wide specificity. The protein is Oligoendopeptidase F homolog (pepF) of Lactococcus lactis subsp. lactis (strain IL1403) (Streptococcus lactis).